The sequence spans 264 residues: Putative hydro-lyase Cgl2544/cg2803 (264 aa).

This sequence belongs to the D-glutamate cyclase family.

The sequence is that of Putative hydro-lyase Cgl2544/cg2803 from Corynebacterium glutamicum (strain ATCC 13032 / DSM 20300 / JCM 1318 / BCRC 11384 / CCUG 27702 / LMG 3730 / NBRC 12168 / NCIMB 10025 / NRRL B-2784 / 534).